A 316-amino-acid polypeptide reads, in one-letter code: Annexin D5 (316 aa).

At alanine 2 the chain carries N-acetylalanine. Annexin repeat units lie at residues 11 to 82 (PSPR…LWMP), 83 to 154 (EAVE…AYLN), 166 to 238 (ASVE…TILQ), and 242 to 313 (NSCF…SLLG). 4 residues coordinate Ca(2+): phenylalanine 24, glycine 26, glycine 28, and glutamate 68. A Phosphoserine modification is found at serine 95. Threonine 112 carries the post-translational modification Phosphothreonine. Position 259 (glycine 259) interacts with Ca(2+). Residue tyrosine 284 is modified to Phosphotyrosine. Residues aspartate 299 and threonine 300 each contribute to the Ca(2+) site.

This sequence belongs to the annexin (TC 1.A.31.1) family. In terms of tissue distribution, expressed mainly in roots and flowers. Lower in stems and leaves.

The chain is Annexin D5 (ANN5) from Arabidopsis thaliana (Mouse-ear cress).